We begin with the raw amino-acid sequence, 513 residues long: Mannosyl-oligosaccharide alpha-1,2-mannosidase 1B (513 aa).

A signal peptide spans 1-21 (MHLPSLSLSLTALAIASPSAA). 8 N-linked (GlcNAc...) asparagine glycosylation sites follow: asparagine 97, asparagine 117, asparagine 150, asparagine 184, asparagine 251, asparagine 322, asparagine 348, and asparagine 368. Cysteine 334 and cysteine 363 are joined by a disulfide. Glutamate 377 acts as the Proton donor in catalysis. Ca(2+) is bound at residue threonine 503.

Belongs to the glycosyl hydrolase 47 family. Monomer. Ca(2+) is required as a cofactor. Requires Mg(2+) as cofactor.

Its subcellular location is the cytoplasmic vesicle lumen. It carries out the reaction N(4)-(alpha-D-Man-(1-&gt;2)-alpha-D-Man-(1-&gt;2)-alpha-D-Man-(1-&gt;3)-[alpha-D-Man-(1-&gt;2)-alpha-D-Man-(1-&gt;3)-[alpha-D-Man-(1-&gt;2)-alpha-D-Man-(1-&gt;6)]-alpha-D-Man-(1-&gt;6)]-beta-D-Man-(1-&gt;4)-beta-D-GlcNAc-(1-&gt;4)-beta-D-GlcNAc)-L-asparaginyl-[protein] (N-glucan mannose isomer 9A1,2,3B1,2,3) + 4 H2O = N(4)-(alpha-D-Man-(1-&gt;3)-[alpha-D-Man-(1-&gt;3)-[alpha-D-Man-(1-&gt;6)]-alpha-D-Man-(1-&gt;6)]-beta-D-Man-(1-&gt;4)-beta-D-GlcNAc-(1-&gt;4)-beta-D-GlcNAc)-L-asparaginyl-[protein] (N-glucan mannose isomer 5A1,2) + 4 beta-D-mannose. The catalysed reaction is N(4)-(alpha-D-Man-(1-&gt;2)-alpha-D-Man-(1-&gt;2)-alpha-D-Man-(1-&gt;3)-[alpha-D-Man-(1-&gt;3)-[alpha-D-Man-(1-&gt;2)-alpha-D-Man-(1-&gt;6)]-alpha-D-Man-(1-&gt;6)]-beta-D-Man-(1-&gt;4)-beta-D-GlcNAc-(1-&gt;4)-beta-D-GlcNAc)-L-asparaginyl-[protein] (N-glucan mannose isomer 8A1,2,3B1,3) + 3 H2O = N(4)-(alpha-D-Man-(1-&gt;3)-[alpha-D-Man-(1-&gt;3)-[alpha-D-Man-(1-&gt;6)]-alpha-D-Man-(1-&gt;6)]-beta-D-Man-(1-&gt;4)-beta-D-GlcNAc-(1-&gt;4)-beta-D-GlcNAc)-L-asparaginyl-[protein] (N-glucan mannose isomer 5A1,2) + 3 beta-D-mannose. It participates in protein modification; protein glycosylation. Its function is as follows. Involved in the maturation of Asn-linked oligosaccharides. Progressively trims alpha-1,2-linked mannose residues from Man(9)GlcNAc(2) to produce Man(5)GlcNAc(2). The chain is Mannosyl-oligosaccharide alpha-1,2-mannosidase 1B (mns1B) from Aspergillus phoenicis (Aspergillus saitoi).